The sequence spans 86 residues: uncharacterized protein (86 aa).

This is an uncharacterized protein from African swine fever virus (strain Badajoz 1971 Vero-adapted) (Ba71V).